Reading from the N-terminus, the 34-residue chain is Protamine-Z1/Z2 (34 aa).

The segment at 1–34 is disordered; that stretch reads PRRRRRSSRPVRRRRRYRRSTAARRRRRVVRRRR.

Testis.

It localises to the nucleus. The protein localises to the chromosome. Functionally, protamines substitute for histones in the chromatin of sperm during the haploid phase of spermatogenesis. They compact sperm DNA into a highly condensed, stable and inactive complex. In Sarda orientalis (Striped bonito), this protein is Protamine-Z1/Z2.